Here is a 66-residue protein sequence, read N- to C-terminus: Cytochrome c oxidase subunit 26, mitochondrial (66 aa).

A mitochondrion-targeting transit peptide spans 1 to 8 (MFFSQVLR). Residues 9 to 27 (SSARAAPIKRYTGGRIGES) lie on the Mitochondrial matrix side of the membrane. Residues 28–64 (WVITEGRRLIPEIFQWSAVLSVCLGWPGAVYFFSKAR) form a helical membrane-spanning segment. Topologically, residues 65 to 66 (KA) are mitochondrial intermembrane.

This sequence belongs to the fungal cytochrome c oxidase subunit 26 family. In terms of assembly, component of the cytochrome c oxidase (complex IV, CIV), a multisubunit enzyme composed of 12 subunits. The complex is composed of a catalytic core of 3 subunits COX1, COX2 and COX3, encoded in the mitochondrial DNA, and 9 supernumerary subunits COX4, COX5A (or COX5B), COX6, COX7, COX8, COX9, COX12, COX13 and COX26, which are encoded in the nuclear genome. The complex exists as a monomer or a dimer and forms supercomplexes (SCs) in the inner mitochondrial membrane with a dimer of ubiquinol-cytochrome c oxidoreductase (cytochrome b-c1 complex, complex III, CIII), resulting in 2 different assemblies (supercomplexes III(2)IV and III(2)IV(2)).

It localises to the mitochondrion inner membrane. Its function is as follows. Component of the cytochrome c oxidase, the last enzyme in the mitochondrial electron transport chain which drives oxidative phosphorylation. The respiratory chain contains 3 multisubunit complexes succinate dehydrogenase (complex II, CII), ubiquinol-cytochrome c oxidoreductase (cytochrome b-c1 complex, complex III, CIII) and cytochrome c oxidase (complex IV, CIV), that cooperate to transfer electrons derived from NADH and succinate to molecular oxygen, creating an electrochemical gradient over the inner membrane that drives transmembrane transport and the ATP synthase. Cytochrome c oxidase is the component of the respiratory chain that catalyzes the reduction of oxygen to water. Electrons originating from reduced cytochrome c in the intermembrane space (IMS) are transferred via the dinuclear copper A center (CU(A)) of COX2 and heme A of COX1 to the active site in COX1, a binuclear center (BNC) formed by heme A3 and copper B (CU(B)). The BNC reduces molecular oxygen to 2 water molecules using 4 electrons from cytochrome c in the IMS and 4 protons from the mitochondrial matrix. The polypeptide is Cytochrome c oxidase subunit 26, mitochondrial (COX26) (Saccharomyces cerevisiae (strain ATCC 204508 / S288c) (Baker's yeast)).